Reading from the N-terminus, the 340-residue chain is Formimidoylglutamase (340 aa).

6 residues coordinate Mn(2+): His-129, Asp-160, His-162, Asp-164, Asp-257, and Asp-259.

Belongs to the arginase family. It depends on Mn(2+) as a cofactor.

The catalysed reaction is N-formimidoyl-L-glutamate + H2O = formamide + L-glutamate. The protein operates within amino-acid degradation; L-histidine degradation into L-glutamate; L-glutamate from N-formimidoyl-L-glutamate (hydrolase route): step 1/1. Its function is as follows. Catalyzes the conversion of N-formimidoyl-L-glutamate to L-glutamate and formamide. The protein is Formimidoylglutamase of Vibrio parahaemolyticus serotype O3:K6 (strain RIMD 2210633).